Reading from the N-terminus, the 446-residue chain is Adenylosuccinate synthetase (446 aa).

GTP contacts are provided by residues 12-18 and 40-42; these read GDEGKGK and GHT. D13 (proton acceptor) is an active-site residue. Residues D13 and G40 each coordinate Mg(2+). IMP contacts are provided by residues 13–16, 38–41, T128, R142, Q223, T238, and R302; these read DEGK and NAGH. Residue H41 is the Proton donor of the active site. 298-304 is a substrate binding site; that stretch reads TTTGRRR. Residues R304, 330–332, and 412–414 each bind GTP; these read KLD and SLG.

This sequence belongs to the adenylosuccinate synthetase family. As to quaternary structure, homodimer. It depends on Mg(2+) as a cofactor.

The protein localises to the cytoplasm. It carries out the reaction IMP + L-aspartate + GTP = N(6)-(1,2-dicarboxyethyl)-AMP + GDP + phosphate + 2 H(+). The protein operates within purine metabolism; AMP biosynthesis via de novo pathway; AMP from IMP: step 1/2. Its function is as follows. Plays an important role in the de novo pathway of purine nucleotide biosynthesis. Catalyzes the first committed step in the biosynthesis of AMP from IMP. This is Adenylosuccinate synthetase from Crocosphaera subtropica (strain ATCC 51142 / BH68) (Cyanothece sp. (strain ATCC 51142)).